We begin with the raw amino-acid sequence, 37 residues long: Large ribosomal subunit protein bL36 (37 aa).

This sequence belongs to the bacterial ribosomal protein bL36 family.

The sequence is that of Large ribosomal subunit protein bL36 from Bacillus pumilus (strain SAFR-032).